Consider the following 697-residue polypeptide: Elongation factor G 2 (697 aa).

The tr-type G domain maps to 6-281 (TNYRNFGIFA…AVVDFLPNPT (276 aa)). GTP contacts are provided by residues 15–22 (AHVDAGKT), 79–83 (DTPGH), and 133–136 (NKLD).

It belongs to the TRAFAC class translation factor GTPase superfamily. Classic translation factor GTPase family. EF-G/EF-2 subfamily.

It localises to the cytoplasm. Its function is as follows. Catalyzes the GTP-dependent ribosomal translocation step during translation elongation. During this step, the ribosome changes from the pre-translocational (PRE) to the post-translocational (POST) state as the newly formed A-site-bound peptidyl-tRNA and P-site-bound deacylated tRNA move to the P and E sites, respectively. Catalyzes the coordinated movement of the two tRNA molecules, the mRNA and conformational changes in the ribosome. The chain is Elongation factor G 2 from Trichodesmium erythraeum (strain IMS101).